Here is a 154-residue protein sequence, read N- to C-terminus: MEGLTSEQMVAFQEAFLLFDKNGDGCITLEELAAVTRSLGLEPTDQELNDMMREVDTDGNGIIDFQEFLSLIARKMKDGDGDEELKEAFEVLDKDQNGFISPTELRTVMTNLGEKMTDEEVEQMIREADTDGDGQVNYDEFVIMMKNAERKISG.

EF-hand domains follow at residues 7-42, 43-78, 80-115, and 116-151; these read EQMVAFQEAFLLFDKNGDGCITLEELAAVTRSLGLE, PTDQELNDMMREVDTDGNGIIDFQEFLSLIARKMKD, DGDEELKEAFEVLDKDQNGFISPTELRTVMTNLGEK, and MTDEEVEQMIREADTDGDGQVNYDEFVIMMKNAERK. Ca(2+)-binding residues include D20, N22, D24, C26, E31, D56, D58, N60, E67, D93, D95, N97, and E104. At K115 the chain carries N6,N6,N6-trimethyllysine. Residues D129, D131, D133, Q135, and E140 each coordinate Ca(2+).

The protein belongs to the calmodulin family.

Its function is as follows. Potential calcium sensor. This Oryza sativa subsp. japonica (Rice) protein is Calmodulin-like protein 4 (CML4).